Reading from the N-terminus, the 103-residue chain is MLNDLYEEIKLRKEQPKEGSYTNYLFDKGLDKILKKVGEEATEVVIAAKNDKQELIAEVSDLTYHLLVLLAEKNIPLAAIQTELKNREGKLSTTRDRKEINDL.

It belongs to the PRA-PH family.

The protein resides in the cytoplasm. The enzyme catalyses 1-(5-phospho-beta-D-ribosyl)-ATP + H2O = 1-(5-phospho-beta-D-ribosyl)-5'-AMP + diphosphate + H(+). Its pathway is amino-acid biosynthesis; L-histidine biosynthesis; L-histidine from 5-phospho-alpha-D-ribose 1-diphosphate: step 2/9. The polypeptide is Phosphoribosyl-ATP pyrophosphatase (Listeria monocytogenes serotype 4a (strain HCC23)).